Reading from the N-terminus, the 621-residue chain is pH-response transcription factor pacc-1 (621 aa).

The segment covering 1-14 (MSSTPAQENGTVNG) has biased composition (polar residues). A disordered region spans residues 1-87 (MSSTPAQENG…PTTASNSSAP (87 aa)). A compositionally biased stretch (low complexity) spans 15 to 87 (ANAAPAPAPA…PTTASNSSAP (73 aa)). C2H2-type zinc fingers lie at residues 95 to 120 (LVCR…CEKH), 131 to 155 (LTCQ…VRVH), and 161 to 183 (HKCD…VKTH). 2 disordered regions span residues 395 to 539 (PTYA…PETY) and 566 to 621 (DEDD…PRIN). Composition is skewed to low complexity over residues 409-423 (ASLA…PHSA) and 436-465 (SYTS…VSYP). The short motif at 464–467 (YPTL) is the YPX[LI] motif 1 element. A compositionally biased stretch (polar residues) spans 476 to 486 (PSTSGLGSNFT). Positions 502 to 511 (RAADEADRAP) are enriched in basic and acidic residues. A compositionally biased stretch (polar residues) spans 515–525 (ASEQATVSSPS). The segment covering 583–595 (RNQQQRNQQQQQQ) has biased composition (low complexity). The YPX[LI] motif 2 signature appears at 614-617 (YPVL).

This sequence belongs to the pacC/RIM101 family. As to quaternary structure, binds to DNA. Interacts with palA/prr-1, which binds to the two YPX[LI] motifs and is required for proteolytic processing. Activated by C-terminal proteolytic cleavage by signaling protease (probably palB/RIM13) at neutral to alkaline ambient pH.

It is found in the cytoplasm. It localises to the nucleus. Functionally, transcription factor that mediates regulation of both acid- and alkaline-expressed genes in response to ambient pH. At alkaline ambient pH, activates transcription of alkaline-expressed genes (including pacc-1 itself) and represses transcription of acid-expressed genes. In Neurospora crassa (strain ATCC 24698 / 74-OR23-1A / CBS 708.71 / DSM 1257 / FGSC 987), this protein is pH-response transcription factor pacc-1 (pacc-1).